Reading from the N-terminus, the 130-residue chain is Large ribosomal subunit protein bL12 (130 aa).

Belongs to the bacterial ribosomal protein bL12 family. Homodimer. Part of the ribosomal stalk of the 50S ribosomal subunit. Forms a multimeric L10(L12)X complex, where L10 forms an elongated spine to which 2 to 4 L12 dimers bind in a sequential fashion. Binds GTP-bound translation factors.

Forms part of the ribosomal stalk which helps the ribosome interact with GTP-bound translation factors. Is thus essential for accurate translation. In Nostoc punctiforme (strain ATCC 29133 / PCC 73102), this protein is Large ribosomal subunit protein bL12.